We begin with the raw amino-acid sequence, 203 residues long: Twist-related protein 1 (203 aa).

The segment covering 1-18 (MMQDVSSSPVSPADDSLS) has biased composition (low complexity). The interval 1 to 106 (MMQDVSSSPV…GGGSPQSYEE (106 aa)) is disordered. Residues 34–43 (RGGRKRRSSS) are compositionally biased toward basic residues. 2 stretches are compositionally biased toward gly residues: residues 47-66 (AGGGAGPGGAASGGVGGGDE) and 81-100 (GCGGGGGGGAGGGSSSGGGS). The region spanning 109-160 (TQRVMANVRERQRTQSLNEAFAALRKIIPTLPSDKLSKIQTLKLAARYIDFL) is the bHLH domain. The sufficient for transactivation activity stretch occupies residues 162–192 (QVLQSDELDSKMASCSYVAHERLSYAFSVWR).

As to quaternary structure, efficient DNA binding requires dimerization with another bHLH protein. Homodimer or heterodimer with E proteins such as TCF3. ID1 binds preferentially to TCF3 but does not interact efficiently with TWIST1 so ID1 levels control the amount of TCF3 available to dimerize with TWIST and thus determine the type of dimer formed.

Its subcellular location is the nucleus. Acts as a transcriptional regulator. Inhibits myogenesis by sequestrating E proteins, inhibiting trans-activation by MEF2, and inhibiting DNA-binding by MYOD1 through physical interaction. This interaction probably involves the basic domains of both proteins. Also represses expression of pro-inflammatory cytokines such as TNFA and IL1B. Regulates cranial suture patterning and fusion. Activates transcription as a heterodimer with E proteins. Regulates gene expression differentially, depending on dimer composition. Homodimers induce expression of FGFR2 and POSTN while heterodimers repress FGFR2 and POSTN expression and induce THBS1 expression. Heterodimerization is also required for osteoblast differentiation. Represses the activity of the circadian transcriptional activator: NPAS2-BMAL1 heterodimer. This Pongo pygmaeus (Bornean orangutan) protein is Twist-related protein 1 (TWIST1).